The following is a 198-amino-acid chain: Armadillo repeat-containing protein 7 (198 aa).

ARM repeat units follow at residues 57–99 (QVLD…HAGG) and 100–140 (VPLI…TATP). S169 carries the post-translational modification Phosphoserine.

In terms of assembly, component of the minor spliceosome. Within this complex, interacts with RBM48.

Its function is as follows. As a component of the minor spliceosome, involved in the splicing of U12-type introns in pre-mRNAs. This chain is Armadillo repeat-containing protein 7 (ARMC7), found in Homo sapiens (Human).